The chain runs to 182 residues: Glutathione-regulated potassium-efflux system ancillary protein KefG (182 aa).

The protein belongs to the NAD(P)H dehydrogenase (quinone) family. KefG subfamily. In terms of assembly, interacts with KefB.

It localises to the cell inner membrane. The enzyme catalyses a quinone + NADH + H(+) = a quinol + NAD(+). The catalysed reaction is a quinone + NADPH + H(+) = a quinol + NADP(+). In terms of biological role, regulatory subunit of a potassium efflux system that confers protection against electrophiles. Required for full activity of KefB. This is Glutathione-regulated potassium-efflux system ancillary protein KefG from Yersinia pseudotuberculosis serotype O:1b (strain IP 31758).